A 51-amino-acid chain; its full sequence is Sperm protamine P1 (51 aa).

The protein belongs to the protamine P1 family. In terms of tissue distribution, testis.

It is found in the nucleus. The protein localises to the chromosome. Functionally, protamines substitute for histones in the chromatin of sperm during the haploid phase of spermatogenesis. They compact sperm DNA into a highly condensed, stable and inactive complex. The chain is Sperm protamine P1 (PRM1) from Trachypithecus johnii (Nilgiri langur).